Reading from the N-terminus, the 379-residue chain is Protein OSCP1 (379 aa).

In terms of tissue distribution, predominantly expressed in testis.

The protein resides in the basal cell membrane. In terms of biological role, may be involved in drug clearance in the placenta. In Rattus norvegicus (Rat), this protein is Protein OSCP1 (Oscp1).